Reading from the N-terminus, the 727-residue chain is Prolyl endopeptidase-like (727 aa).

Catalysis depends on charge relay system residues serine 559, aspartate 645, and histidine 690.

The protein belongs to the peptidase S9A family. As to quaternary structure, homodimer. Interacts with the AP-1 complex.

Its subcellular location is the cytoplasm. It localises to the cytosol. The protein resides in the golgi apparatus. The protein localises to the trans-Golgi network. It is found in the cytoskeleton. Its subcellular location is the nucleus. Serine peptidase whose precise substrate specificity remains unclear. Does not cleave peptides after a arginine or lysine residue. Regulates trans-Golgi network morphology and sorting by regulating the membrane binding of the AP-1 complex. May play a role in the regulation of synaptic vesicle exocytosis. The chain is Prolyl endopeptidase-like (PREPL) from Pongo abelii (Sumatran orangutan).